Consider the following 293-residue polypeptide: 33 kDa chaperonin (293 aa).

Cystine bridges form between C236-C238 and C269-C272.

It belongs to the HSP33 family. Post-translationally, under oxidizing conditions two disulfide bonds are formed involving the reactive cysteines. Under reducing conditions zinc is bound to the reactive cysteines and the protein is inactive.

It is found in the cytoplasm. Redox regulated molecular chaperone. Protects both thermally unfolding and oxidatively damaged proteins from irreversible aggregation. Plays an important role in the bacterial defense system toward oxidative stress. This Lactobacillus delbrueckii subsp. bulgaricus (strain ATCC 11842 / DSM 20081 / BCRC 10696 / JCM 1002 / NBRC 13953 / NCIMB 11778 / NCTC 12712 / WDCM 00102 / Lb 14) protein is 33 kDa chaperonin.